The primary structure comprises 339 residues: D-erythrose-4-phosphate dehydrogenase (339 aa).

11 to 12 (RI) serves as a coordination point for NAD(+). Substrate is bound by residues 153–155 (SCT), arginine 199, 212–213 (TK), and arginine 235. Cysteine 154 serves as the catalytic Nucleophile. Asparagine 317 provides a ligand contact to NAD(+).

The protein belongs to the glyceraldehyde-3-phosphate dehydrogenase family. Epd subfamily. As to quaternary structure, homotetramer.

It localises to the cytoplasm. It catalyses the reaction D-erythrose 4-phosphate + NAD(+) + H2O = 4-phospho-D-erythronate + NADH + 2 H(+). It participates in cofactor biosynthesis; pyridoxine 5'-phosphate biosynthesis; pyridoxine 5'-phosphate from D-erythrose 4-phosphate: step 1/5. In terms of biological role, catalyzes the NAD-dependent conversion of D-erythrose 4-phosphate to 4-phosphoerythronate. The chain is D-erythrose-4-phosphate dehydrogenase from Shewanella frigidimarina (strain NCIMB 400).